A 460-amino-acid polypeptide reads, in one-letter code: 7-cyano-7-deazaguanine synthase 2 (460 aa).

Catalysis depends on cysteine 2, which acts as the For GATase activity. In terms of domain architecture, Glutamine amidotransferase type-2 spans 2–225 (CSVTGVLIIK…PYSIVEVNDN (224 aa)). 245-255 (ASGGLDSTVAA) is an ATP binding site. Positions 426, 434, 437, and 440 each coordinate Zn(2+).

The protein belongs to the QueC family. It depends on Zn(2+) as a cofactor.

It catalyses the reaction 7-carboxy-7-deazaguanine + NH4(+) + ATP = 7-cyano-7-deazaguanine + ADP + phosphate + H2O + H(+). It functions in the pathway purine metabolism; 7-cyano-7-deazaguanine biosynthesis. Its function is as follows. Catalyzes the ATP-dependent conversion of 7-carboxy-7-deazaguanine (CDG) to 7-cyano-7-deazaguanine (preQ(0)). This chain is 7-cyano-7-deazaguanine synthase 2 (queC2), found in Sulfurisphaera tokodaii (strain DSM 16993 / JCM 10545 / NBRC 100140 / 7) (Sulfolobus tokodaii).